The chain runs to 370 residues: MSGPRTCFCLPSALVLVLLSLSTSALGTAPEPSGVHEESPAGGGTDLLPHPEDLSASDNPDLEFVKRLYDFGLGKRAYSYVSEYKRLPVYNFGLGKRSKMYGFGLGKRDGRMYSFGLGKRDYDYYGEEDEDDQQAIGDEDIEESDVGDLMDKRDRLYSFGLGKRARPYSFGLGKRAPSGAQRLYGFGLGKRGGSLYSFGLGKRGDGRLYAFGLGKRPVNSGRSSGSRFNFGLGKRSDDIDFRELEEKFAEDKRYPQEHRFSFGLGKREVEPSELEAVRNEEKDNSSVHDKKNNTNDMHSGERIKRSLHYPFGIRKLESSYDLNSASSLNSEENDDITPEEFSRMVRRPFNFGLGKRIPMYDFGIGKRSER.

Residues 1–27 (MSGPRTCFCLPSALVLVLLSLSTSALG) form the signal peptide. Residues 28–65 (TAPEPSGVHEESPAGGGTDLLPHPEDLSASDNPDLEFV) constitute a propeptide that is removed on maturation. The disordered stretch occupies residues 29-58 (APEPSGVHEESPAGGGTDLLPHPEDLSASD). 4 positions are modified to leucine amide: Leu-73, Leu-94, Leu-105, and Leu-117. The propeptide occupies 121-151 (DYDYYGEEDEDDQQAIGDEDIEESDVGDLMD). Leucine amide is present on residues Leu-161, Leu-172, Leu-188, Leu-200, Leu-213, and Leu-232. Residues 236–251 (SDDIDFRELEEKFAED) constitute a propeptide that is removed on maturation. Leucine amide is present on Leu-264. Residues 268–345 (EVEPSELEAV…ITPEEFSRMV (78 aa)) constitute a propeptide that is removed on maturation. Residues 273–298 (ELEAVRNEEKDNSSVHDKKNNTNDMH) form a disordered region. A Leucine amide modification is found at Leu-353. Position 364 is an isoleucine amide (Ile-364). Positions 368–370 (SER) are excised as a propeptide.

The protein belongs to the allatostatin family. Brain, subesophageal ganglion and corpus allatum.

The protein localises to the secreted. In terms of biological role, neuropeptide inhibitors of juvenile hormone synthesis and gut muscle contraction. This Diploptera punctata (Pacific beetle cockroach) protein is Allatostatins.